The primary structure comprises 247 residues: Geranylgeranylglyceryl phosphate synthase (247 aa).

The Mg(2+) site is built by D23 and S52. Sn-glycerol 1-phosphate is bound by residues 171 to 177 (YLEAGSG), 203 to 204 (GG), and 225 to 226 (GT).

The protein belongs to the GGGP/HepGP synthase family. Group II subfamily. It depends on Mg(2+) as a cofactor.

The protein localises to the cytoplasm. The enzyme catalyses sn-glycerol 1-phosphate + (2E,6E,10E)-geranylgeranyl diphosphate = sn-3-O-(geranylgeranyl)glycerol 1-phosphate + diphosphate. The protein operates within membrane lipid metabolism; glycerophospholipid metabolism. Prenyltransferase that catalyzes the transfer of the geranylgeranyl moiety of geranylgeranyl diphosphate (GGPP) to the C3 hydroxyl of sn-glycerol-1-phosphate (G1P). This reaction is the first ether-bond-formation step in the biosynthesis of archaeal membrane lipids. The sequence is that of Geranylgeranylglyceryl phosphate synthase from Methanosarcina mazei (strain ATCC BAA-159 / DSM 3647 / Goe1 / Go1 / JCM 11833 / OCM 88) (Methanosarcina frisia).